Reading from the N-terminus, the 253-residue chain is uncharacterized protein (253 aa).

Belongs to the A.longa ORF167/ORF288 family.

It is found in the plastid. This is an uncharacterized protein from Euglena longa (Euglenophycean alga).